The primary structure comprises 93 residues: Small integral membrane protein 36 (93 aa).

Residues 14–34 (LIILVASYVILLLVFLISCVL) form a helical membrane-spanning segment. The segment at 73 to 93 (PKGPGLSLGDPAPLGKKSTMV) is disordered.

It is found in the membrane. This is Small integral membrane protein 36 from Homo sapiens (Human).